The primary structure comprises 215 residues: uncharacterized protein (215 aa).

A signal peptide spans 1 to 17 (MKKVLASATILSLMLVG). Residues 17–110 (GCSNGGNDES…NKQQQSVQDN (94 aa)) are disordered. The N-palmitoyl cysteine moiety is linked to residue Cys18. A lipid anchor (S-diacylglycerol cysteine) is attached at Cys18. Positions 25-69 (ESSHKDDSSKTEQKDKSSSQHDSKKDSKRNDTNNKQDNQENKSNK) are enriched in basic and acidic residues. Polar residues predominate over residues 70–95 (EQTSNQNSNAGEQRTSERPTTNSNGI). Low complexity predominate over residues 96-110 (SSDNQNKQQQSVQDN).

Its subcellular location is the cell membrane. This is an uncharacterized protein from Staphylococcus epidermidis (strain ATCC 12228 / FDA PCI 1200).